The following is a 322-amino-acid chain: Gluconeogenesis factor (322 aa).

NAD(+)-binding positions include threonine 13, 217 to 219 (NVM), 263 to 267 (KYAKE), and 300 to 301 (RH).

The protein belongs to the gluconeogenesis factor family.

It is found in the cytoplasm. In terms of biological role, required for morphogenesis under gluconeogenic growth conditions. The protein is Gluconeogenesis factor of Halalkalibacterium halodurans (strain ATCC BAA-125 / DSM 18197 / FERM 7344 / JCM 9153 / C-125) (Bacillus halodurans).